The primary structure comprises 251 residues: uncharacterized protein (251 aa).

This is an uncharacterized protein from Bacillus subtilis (strain 168).